A 370-amino-acid chain; its full sequence is Isopentenyl-diphosphate delta-isomerase (370 aa).

8–9 contacts substrate; the sequence is RK. Residues T65, 66-68, S99, and N127 contribute to the FMN site; that span reads GMT. 99 to 101 provides a ligand contact to substrate; sequence SQR. Residue Q166 participates in substrate binding. E167 serves as a coordination point for Mg(2+). FMN contacts are provided by residues K198, S223, T228, 277–279, and 298–299; these read GMR and AL.

The protein belongs to the IPP isomerase type 2 family. As to quaternary structure, homooctamer. Dimer of tetramers. The cofactor is FMN. It depends on NADPH as a cofactor. Mg(2+) is required as a cofactor.

The protein resides in the cytoplasm. It carries out the reaction isopentenyl diphosphate = dimethylallyl diphosphate. Its function is as follows. Involved in the biosynthesis of isoprenoids. Catalyzes the 1,3-allylic rearrangement of the homoallylic substrate isopentenyl (IPP) to its allylic isomer, dimethylallyl diphosphate (DMAPP). This Pyrococcus abyssi (strain GE5 / Orsay) protein is Isopentenyl-diphosphate delta-isomerase.